We begin with the raw amino-acid sequence, 184 residues long: Chromophore lyase CpcS/CpeS 1 (184 aa).

It belongs to the CpcS/CpeS biliprotein lyase family.

Covalently attaches a chromophore to Cys residue(s) of phycobiliproteins. The protein is Chromophore lyase CpcS/CpeS 1 of Synechococcus sp. (strain JA-3-3Ab) (Cyanobacteria bacterium Yellowstone A-Prime).